Consider the following 837-residue polypeptide: SLIT and NTRK-like protein 4 (837 aa).

The signal sequence occupies residues 1 to 18 (MFLWLFLIVSALISSTNA). Topologically, residues 19–618 (DSDISVEICN…SPPGGPVPLS (600 aa)) are extracellular. LRR repeat units follow at residues 60 to 81 (NFYH…TFVN), 84 to 105 (HAVS…AFLG), 108 to 129 (ALKQ…TFLG), 132 to 153 (NLEY…AFNK), 156 to 177 (KLKV…IFRF), and 179 to 200 (SLTH…GVLE). The N-linked (GlcNAc...) asparagine glycan is linked to N81. Positions 213 to 264 (NPWNCSCDLLPLKAWLENMPYNIYIGEAICETPSDLYGRLLKETNKQELCPM) constitute an LRRCT 1 domain. N-linked (GlcNAc...) asparagine glycosylation is present at N325. Residues 333-375 (QTRVPPLTPCPVPCFCKTHPSDLGLSVNCQEKNIQSMSELTPK) form the LRRNT domain. LRR repeat units lie at residues 378–399 (NAKK…DFTE), 402–423 (GLDL…VFHN), 426–447 (NLRR…IFSG), 450–471 (NLQY…TFDS), 474–495 (NLQL…IFSG), and 497–518 (PLAR…GVLD). N423 carries N-linked (GlcNAc...) asparagine glycosylation. In terms of domain architecture, LRRCT 2 spans 531-582 (NPWDCTCDLVALKLWLEKLNDGIVVKELKCETPVQFANIELKSLKNEILCPK). A helical membrane pass occupies residues 619 to 639 (ILILSILVVLILTVFVAFCLL). Residues 640–837 (VFVLRRNKKP…LEEQTALNKI (198 aa)) lie on the Cytoplasmic side of the membrane.

Belongs to the SLITRK family. As to quaternary structure, interacts (via LRR 1 and 2 repeats) with PTPRD (via extracellular domain). As to expression, in the adult, significant expression is detected only in the brain. Broadly expressed in embryonic brain with highest expression in subventricular zone, subplate, cortical plate, pyramidal cell layer of hippocampus, thalamus and hypothalamus.

It is found in the membrane. The protein localises to the cell membrane. Functionally, it is involved in synaptogenesis and promotes synapse differentiation. Suppresses neurite outgrowth. The protein is SLIT and NTRK-like protein 4 (Slitrk4) of Mus musculus (Mouse).